Here is a 152-residue protein sequence, read N- to C-terminus: Endoribonuclease YbeY (152 aa).

His111, His115, and His121 together coordinate Zn(2+).

It belongs to the endoribonuclease YbeY family. It depends on Zn(2+) as a cofactor.

It localises to the cytoplasm. Its function is as follows. Single strand-specific metallo-endoribonuclease involved in late-stage 70S ribosome quality control and in maturation of the 3' terminus of the 16S rRNA. This Pseudomonas fluorescens (strain ATCC BAA-477 / NRRL B-23932 / Pf-5) protein is Endoribonuclease YbeY.